Here is a 383-residue protein sequence, read N- to C-terminus: 2-aminoethylphosphonate--pyruvate transaminase (383 aa).

An N6-(pyridoxal phosphate)lysine modification is found at Lys192.

It belongs to the class-V pyridoxal-phosphate-dependent aminotransferase family. PhnW subfamily. As to quaternary structure, homodimer. It depends on pyridoxal 5'-phosphate as a cofactor.

It catalyses the reaction (2-aminoethyl)phosphonate + pyruvate = phosphonoacetaldehyde + L-alanine. Involved in phosphonate degradation. The chain is 2-aminoethylphosphonate--pyruvate transaminase from Rhizobium meliloti (strain 1021) (Ensifer meliloti).